Here is a 449-residue protein sequence, read N- to C-terminus: Glucose-6-phosphate isomerase (449 aa).

Glu-290 (proton donor) is an active-site residue. Active-site residues include His-311 and Lys-425.

It belongs to the GPI family.

Its subcellular location is the cytoplasm. It carries out the reaction alpha-D-glucose 6-phosphate = beta-D-fructose 6-phosphate. It functions in the pathway carbohydrate biosynthesis; gluconeogenesis. Its pathway is carbohydrate degradation; glycolysis; D-glyceraldehyde 3-phosphate and glycerone phosphate from D-glucose: step 2/4. Catalyzes the reversible isomerization of glucose-6-phosphate to fructose-6-phosphate. This is Glucose-6-phosphate isomerase from Clostridioides difficile (strain 630) (Peptoclostridium difficile).